A 112-amino-acid polypeptide reads, in one-letter code: Large ribosomal subunit protein mL53 (112 aa).

The protein belongs to the mitochondrion-specific ribosomal protein mL53 family. In terms of assembly, component of the mitochondrial ribosome large subunit (39S) which comprises a 16S rRNA and about 50 distinct proteins.

It is found in the mitochondrion. The sequence is that of Large ribosomal subunit protein mL53 (MRPL53) from Bos taurus (Bovine).